The sequence spans 195 residues: DnaJ homolog subfamily C member 5 (195 aa).

Residues 13-82 (GDSLYIVLGL…RNIYDKYGSL (70 aa)) form the J domain. A disordered region spans residues 162–195 (DMEKEGDGAIVVQPTSATETTQLTSDSHPSYHTE). Residues 174–189 (QPTSATETTQLTSDSH) show a composition bias toward polar residues.

In terms of processing, palmitoylated. Palmitoylation occurs probably in the cysteine-rich domain and regulates DNAJC5 stable membrane attachment.

Its subcellular location is the cytoplasm. It localises to the cytosol. The protein resides in the membrane. It is found in the cytoplasmic vesicle. The protein localises to the secretory vesicle. Its subcellular location is the chromaffin granule membrane. It localises to the melanosome. The protein resides in the cell membrane. In terms of biological role, may have an important role in presynaptic function. May be involved in calcium-dependent neurotransmitter release at nerve endings. The sequence is that of DnaJ homolog subfamily C member 5 from Tetronarce californica (Pacific electric ray).